The sequence spans 445 residues: Argininosuccinate synthase (445 aa).

ATP is bound by residues 17–25 (AFSGGLDTS) and Ala-43. Residue Tyr-99 participates in L-citrulline binding. Residues Gly-129 and Thr-131 each contribute to the ATP site. Residues Thr-131, Asn-135, and Asp-136 each coordinate L-aspartate. Position 135 (Asn-135) interacts with L-citrulline. Asp-136 contributes to the ATP binding site. L-citrulline-binding residues include Arg-139 and Ser-192. Asp-194 is an ATP binding site. Residues Thr-201, Glu-203, and Glu-280 each coordinate L-citrulline.

It belongs to the argininosuccinate synthase family. Type 2 subfamily. In terms of assembly, homotetramer.

Its subcellular location is the cytoplasm. The enzyme catalyses L-citrulline + L-aspartate + ATP = 2-(N(omega)-L-arginino)succinate + AMP + diphosphate + H(+). The protein operates within amino-acid biosynthesis; L-arginine biosynthesis; L-arginine from L-ornithine and carbamoyl phosphate: step 2/3. The chain is Argininosuccinate synthase from Rhodopseudomonas palustris (strain BisB18).